Consider the following 95-residue polypeptide: Basic phospholipase A2 (95 aa).

Residues Lys-7 and Lys-10 are each lipidated (N6-palmitoyl lysine). Ca(2+)-binding residues include Tyr-23, Gly-25, and Gly-27. Intrachain disulfides connect Cys-24-Cys-40, Cys-39-Cys-77, Cys-46-Cys-70, Cys-53-Cys-63, and Cys-57-Cys-68. Residue His-43 is part of the active site. Residue Asp-44 coordinates Ca(2+). Residue Asp-71 is part of the active site.

As to quaternary structure, monomer. Ca(2+) is required as a cofactor. As to expression, expressed by the venom gland.

The protein localises to the secreted. The enzyme catalyses a 1,2-diacyl-sn-glycero-3-phosphocholine + H2O = a 1-acyl-sn-glycero-3-phosphocholine + a fatty acid + H(+). PLA2 catalyzes the calcium-dependent hydrolysis of the 2-acyl groups in 3-sn-phosphoglycerides. Induces local and systemic myotoxicity in an intramuscular mouse model. Induces local edema in a mouse footpad assay. Does not exhibit any anticoagulant effects. Does not mediate an antibacterial effect against Gram-negative and Gram-positive bacteria. The chain is Basic phospholipase A2 from Agkistrodon piscivorus leucostoma (Western cottonmouth).